The sequence spans 416 residues: Peroxisomal isocitrate dehydrogenase [NADP] (416 aa).

Residues 77–79 (TIT) and Arg-84 contribute to the NADP(+) site. Thr-79 contacts substrate. Substrate-binding positions include 96–102 (SPNGTIR), Arg-111, and Arg-134. Mn(2+) is bound at residue Asp-253. Lys-261 provides a ligand contact to NADP(+). Asp-276 lines the Mn(2+) pocket. NADP(+) contacts are provided by residues 311–316 (GTVTRH) and Asn-329. The short motif at 414 to 416 (SRL) is the Peroxisomal targeting signal element.

This sequence belongs to the isocitrate and isopropylmalate dehydrogenases family. Mg(2+) is required as a cofactor. It depends on Mn(2+) as a cofactor.

The protein localises to the peroxisome. It carries out the reaction D-threo-isocitrate + NADP(+) = 2-oxoglutarate + CO2 + NADPH. May be involved in response to oxidative stresses. The chain is Peroxisomal isocitrate dehydrogenase [NADP] (ICDH) from Arabidopsis thaliana (Mouse-ear cress).